We begin with the raw amino-acid sequence, 303 residues long: N-acetyl-D-glucosamine kinase (303 aa).

ATP-binding positions include 4–11 (GFDIGGTK) and 133–140 (GVGGGLIF). Residues His-157, Cys-177, Cys-179, and Cys-184 each coordinate Zn(2+).

It belongs to the ROK (NagC/XylR) family. NagK subfamily.

It carries out the reaction N-acetyl-D-glucosamine + ATP = N-acetyl-D-glucosamine 6-phosphate + ADP + H(+). It functions in the pathway cell wall biogenesis; peptidoglycan recycling. In terms of biological role, catalyzes the phosphorylation of N-acetyl-D-glucosamine (GlcNAc) derived from cell-wall degradation, yielding GlcNAc-6-P. The chain is N-acetyl-D-glucosamine kinase from Escherichia coli O139:H28 (strain E24377A / ETEC).